Consider the following 608-residue polypeptide: Glutamyl-tRNA(Gln) amidotransferase subunit E (608 aa).

A disordered region spans residues 401–428; the sequence is PEETRAANPDGTTRFLRPRPGAARMYPE.

Belongs to the GatB/GatE family. GatE subfamily. Heterodimer of GatD and GatE.

The catalysed reaction is L-glutamyl-tRNA(Gln) + L-glutamine + ATP + H2O = L-glutaminyl-tRNA(Gln) + L-glutamate + ADP + phosphate + H(+). In terms of biological role, allows the formation of correctly charged Gln-tRNA(Gln) through the transamidation of misacylated Glu-tRNA(Gln) in organisms which lack glutaminyl-tRNA synthetase. The reaction takes place in the presence of glutamine and ATP through an activated gamma-phospho-Glu-tRNA(Gln). The GatDE system is specific for glutamate and does not act on aspartate. The protein is Glutamyl-tRNA(Gln) amidotransferase subunit E of Pyrobaculum arsenaticum (strain DSM 13514 / JCM 11321 / PZ6).